Consider the following 142-residue polypeptide: Galectin-16 (142 aa).

One can recognise a Galectin domain in the interval 6–138 (VPYKLPVSLS…DVSLDSVLVN (133 aa)).

Predominantly and highly expressed in the placenta where it is localized mainly in the syncytiotrophoblast and in the endothelia of fetal vessels. Also detected in the amnion and chorionic trophoblasts in fetal membranes.

Binds lactose with high affinity. Strong inducer of T-cell apoptosis. The polypeptide is Galectin-16 (Homo sapiens (Human)).